Reading from the N-terminus, the 250-residue chain is MELLLFVMSLILLTFSKAIPLFNHNSFYFEKLDDCIAAVINCTKSEVPLLLEPIYQPPAYNEDVMSILLQPPTKKKPFSRIMVTDEFLSDFLLLQDNPEQLRTLFALIRDPESRDNWLNFFNGFQTCSPSVGITTCIRDNCRKYSPEKITYVNNFFVDNIAGLEFNISENTDSFYSNIGFLLYLENPAKGVTKIIRFPFNSLTLFDTILNCLKYFHLKTGVELDLLKHMETYNSKLPFRSSRPTILIRNT.

The signal sequence occupies residues 1–18 (MELLLFVMSLILLTFSKA). In terms of domain architecture, gL betaherpesvirus-type spans 31-239 (KLDDCIAAVI…ETYNSKLPFR (209 aa)). A disulfide bridge links Cys-136 with Cys-141.

It belongs to the herpesviridae glycoprotein L (gL) family. Betaherpesvirinae gL subfamily. As to quaternary structure, interacts with glycoprotein H (gH); this interaction is necessary for the correct processing and cell surface expression of gH. Part of a gH-gL-gO complex.

It is found in the virion membrane. It localises to the host cell membrane. Its subcellular location is the host Golgi apparatus. The protein resides in the host trans-Golgi network. The heterodimer glycoprotein H-glycoprotein L is required for the fusion of viral and plasma membranes leading to virus entry into the host cell. Acts as a functional inhibitor of gH and maintains gH in an inhibited form. Upon binding to host integrins, gL dissociates from gH leading to activation of the viral fusion glycoproteins gB and gH. This is Envelope glycoprotein L from Human herpesvirus 6A (strain Uganda-1102) (HHV-6 variant A).